The sequence spans 525 residues: Lysine--tRNA ligase (525 aa).

Mg(2+) contacts are provided by Glu430 and Glu437.

The protein belongs to the class-II aminoacyl-tRNA synthetase family. Homodimer. Mg(2+) serves as cofactor.

The protein localises to the cytoplasm. It catalyses the reaction tRNA(Lys) + L-lysine + ATP = L-lysyl-tRNA(Lys) + AMP + diphosphate. This chain is Lysine--tRNA ligase, found in Chlamydia caviae (strain ATCC VR-813 / DSM 19441 / 03DC25 / GPIC) (Chlamydophila caviae).